The chain runs to 265 residues: U6 snRNA phosphodiesterase 1 (265 aa).

The interval 1-22 is disordered; that stretch reads MSLVCYESSSSGEDDDETISDN. His109 acts as the Proton acceptor in catalysis. Residues 109-111 and 195-201 contribute to the AMP site; these read HLS and DFLLHIS. 197-201 provides a ligand contact to UMP; the sequence is LLHIS. The Proton donor role is filled by His199.

Belongs to the 2H phosphoesterase superfamily. USB1 family.

It is found in the nucleus. It catalyses the reaction a 3'-end uridylyl-uridine-RNA = a 3'-end 2',3'-cyclophospho-uridine-RNA + uridine. Functionally, 3'-5' RNA exonuclease that trims the 3' end of oligo(U) tracts of the pre-U6 small nuclear RNA (snRNA) molecule, leading to the formation of a U6 snRNA 3' end-terminated with a 2',3'-cyclic phosphate.d. Participates in the U6 snRNA 3' end processing that prevents U6 snRNA degradation. This is U6 snRNA phosphodiesterase 1 from Schizosaccharomyces pombe (strain 972 / ATCC 24843) (Fission yeast).